Here is a 230-residue protein sequence, read N- to C-terminus: RING finger protein 141 (230 aa).

Gly2 carries the N-myristoyl glycine lipid modification. Residues 155 to 192 (CCICMDGRADLILPCAHSFCQKCIDKWSDRHRNCPICR) form an RING-type zinc finger.

As to expression, isoform 1 is testis-specific. Isoform 2 is expressed in heart, brain, skeletal muscle, kidney, pancreas, lung, liver and testis. Isoform 3 is expressed in heart, liver, and kidney.

It localises to the membrane. Functionally, may be involved in spermatogenesis. This is RING finger protein 141 (Rnf141) from Mus musculus (Mouse).